Reading from the N-terminus, the 114-residue chain is As-peptide 126 (114 aa).

A signal peptide spans 1–22; it reads MSRALICSLALLAMLVISGTYA. 9 tandem repeats follow at residues 22 to 29, 30 to 37, 38 to 45, 46 to 53, 54 to 61, 62 to 69, 70 to 77, 78 to 85, and 86 to 93. Residues 22 to 93 form a 9 X 8 AA approximate tandem repeats of [AP]-[ILS]-[AP]-A-A-N-A-[DE] region; that stretch reads ASPAANAEAL…AEPLAAANAE (72 aa). Positions 23–104 are excised as a propeptide; that stretch reads SPAANAEALA…SAGPSPLAAA (82 aa). A compositionally biased stretch (low complexity) spans 82–96; sequence ANAEPLAAANAEPSA. A disordered region spans residues 82–114; that stretch reads ANAEPLAAANAEPSAGPSPLAAAQDPPVVKMKG. Position 105 is a pyrrolidone carboxylic acid (glutamine 105). The residue at position 113 (lysine 113) is a Lysine amide.

Expressed by the venom gland.

It localises to the secreted. The chain is As-peptide 126 from Anoplius samariensis (Solitary wasp).